Consider the following 78-residue polypeptide: D-alanyl carrier protein (78 aa).

The Carrier domain occupies 1–78; sequence MEFREQVLDL…KIVEALEELR (78 aa). Serine 36 bears the O-(pantetheine 4'-phosphoryl)serine mark.

The protein belongs to the DltC family. 4'-phosphopantetheine is transferred from CoA to a specific serine of apo-DCP.

It localises to the cytoplasm. Its pathway is cell wall biogenesis; lipoteichoic acid biosynthesis. Functionally, carrier protein involved in the D-alanylation of lipoteichoic acid (LTA). The loading of thioester-linked D-alanine onto DltC is catalyzed by D-alanine--D-alanyl carrier protein ligase DltA. The DltC-carried D-alanyl group is further transferred to cell membrane phosphatidylglycerol (PG) by forming an ester bond, probably catalyzed by DltD. D-alanylation of LTA plays an important role in modulating the properties of the cell wall in Gram-positive bacteria, influencing the net charge of the cell wall. The sequence is that of D-alanyl carrier protein from Staphylococcus epidermidis (strain ATCC 35984 / DSM 28319 / BCRC 17069 / CCUG 31568 / BM 3577 / RP62A).